We begin with the raw amino-acid sequence, 599 residues long: Elongation factor 4 (599 aa).

The 183-residue stretch at 4-186 folds into the tr-type G domain; that stretch reads ENIRNFSIIA…EIVKKIPPPE (183 aa). Residues 16 to 21 and 133 to 136 contribute to the GTP site; these read DHGKST and NKID.

The protein belongs to the TRAFAC class translation factor GTPase superfamily. Classic translation factor GTPase family. LepA subfamily.

The protein localises to the cell inner membrane. The enzyme catalyses GTP + H2O = GDP + phosphate + H(+). Its function is as follows. Required for accurate and efficient protein synthesis under certain stress conditions. May act as a fidelity factor of the translation reaction, by catalyzing a one-codon backward translocation of tRNAs on improperly translocated ribosomes. Back-translocation proceeds from a post-translocation (POST) complex to a pre-translocation (PRE) complex, thus giving elongation factor G a second chance to translocate the tRNAs correctly. Binds to ribosomes in a GTP-dependent manner. The chain is Elongation factor 4 from Geobacter metallireducens (strain ATCC 53774 / DSM 7210 / GS-15).